The sequence spans 503 residues: Probable cytosol aminopeptidase (503 aa).

Mn(2+) contacts are provided by K274 and D279. K286 is an active-site residue. Positions 297, 356, and 358 each coordinate Mn(2+). The active site involves R360.

Belongs to the peptidase M17 family. Requires Mn(2+) as cofactor.

It is found in the cytoplasm. The catalysed reaction is Release of an N-terminal amino acid, Xaa-|-Yaa-, in which Xaa is preferably Leu, but may be other amino acids including Pro although not Arg or Lys, and Yaa may be Pro. Amino acid amides and methyl esters are also readily hydrolyzed, but rates on arylamides are exceedingly low.. It carries out the reaction Release of an N-terminal amino acid, preferentially leucine, but not glutamic or aspartic acids.. Functionally, presumably involved in the processing and regular turnover of intracellular proteins. Catalyzes the removal of unsubstituted N-terminal amino acids from various peptides. The sequence is that of Probable cytosol aminopeptidase from Burkholderia pseudomallei (strain 1106a).